A 317-amino-acid chain; its full sequence is F-box protein FBW2 (317 aa).

An F-box domain is found at phenylalanine 7–isoleucine 54.

Part of a SCF (SKP1-cullin-F-box) protein ligase complex. Interacts with CUL1, CUL2 and SPK1B/ASK2.

The protein resides in the nucleus. It participates in protein modification; protein ubiquitination. Functionally, component of SCF(ASK-cullin-F-box) E3 ubiquitin ligase complexes, which may mediate the ubiquitination and subsequent proteasomal degradation of target proteins. This is F-box protein FBW2 (FBW2) from Arabidopsis thaliana (Mouse-ear cress).